Here is a 187-residue protein sequence, read N- to C-terminus: Intermembrane transport lipoprotein PqiC (187 aa).

The N-terminal stretch at 1-15 (MKKWLVTIAALWLAG) is a signal peptide. Cys-16 carries N-palmitoyl cysteine lipidation. Residue Cys-16 is the site of S-diacylglycerol cysteine attachment.

As to quaternary structure, may form a complex composed of PqiA, PqiB and PqiC. Interacts with PqiB.

It localises to the cell outer membrane. Its function is as follows. Component of a transport pathway that contributes to membrane integrity. This is Intermembrane transport lipoprotein PqiC from Escherichia coli (strain K12).